Here is a 118-residue protein sequence, read N- to C-terminus: UPF0449 protein C19orf25 homolog (118 aa).

A Phosphotyrosine modification is found at Y63. Positions 69 to 105 (YVAMNQRLQQAGAQLEQKRADLQQAGEELERDISQVG) form a coiled coil.

It belongs to the UPF0449 family.

The protein is UPF0449 protein C19orf25 homolog of Bos taurus (Bovine).